A 194-amino-acid chain; its full sequence is Der GTPase-activating protein YihI (194 aa).

A disordered region spans residues 1-81; that stretch reads MSRSKKTRRI…AKVKKDPRVG (81 aa). Basic and acidic residues-rich tracts occupy residues 9 to 23 and 36 to 47; these read RISD…DKKP and TRYELDVQAREE. Residues 59–70 show a composition bias toward polar residues; sequence GSRNVITEQKTA.

The protein belongs to the YihI family. As to quaternary structure, interacts with Der.

Functionally, a GTPase-activating protein (GAP) that modifies Der/EngA GTPase function. May play a role in ribosome biogenesis. The sequence is that of Der GTPase-activating protein YihI from Haemophilus ducreyi (strain 35000HP / ATCC 700724).